The sequence spans 116 residues: Large ribosomal subunit protein bL17 (116 aa).

This sequence belongs to the bacterial ribosomal protein bL17 family. In terms of assembly, part of the 50S ribosomal subunit. Contacts protein L32.

The chain is Large ribosomal subunit protein bL17 from Prochlorococcus marinus (strain MIT 9312).